The chain runs to 461 residues: Transforming growth factor beta-1-induced transcript 1 protein (461 aa).

M1 bears the N-acetylmethionine mark. The tract at residues 1 to 87 (MEDLDALLSD…PFSSSSGVLG (87 aa)) is disordered. Positions 1–200 (MEDLDALLSD…GCPSPPGQTS (200 aa)) are transcription activation. The interaction with PTK2B/PYK2 stretch occupies residues 1 to 240 (MEDLDALLSD…CNKPIAGQVV (240 aa)). The LD motif 1 motif lies at 3–15 (DLDALLSDLETTT). T33 bears the Phosphothreonine mark. Position 38 is a phosphotyrosine (Y38). Low complexity predominate over residues 44 to 53 (TGSGESSGTT). Y60 is subject to Phosphotyrosine. Phosphoserine is present on S68. Residues 83 to 136 (SGVLGNGLCELDRLLQELNATQFNITDEIMSQFPSSKMAEGEEKEDQSEDKSSP) form an interaction with PTK2/FAK1 region. The short motif at 92 to 104 (ELDRLLQELNATQ) is the LD motif 2 element. The tract at residues 116 to 154 (PSSKMAEGEEKEDQSEDKSSPTVPPSPFPAPSKPSATSA) is disordered. Positions 137 to 147 (TVPPSPFPAPS) are enriched in pro residues. Phosphoserine is present on residues S141, S164, and S186. Positions 157–168 (ELDRLMASLSDF) match the LD motif 3 motif. The tract at residues 171-204 (QNHLPASGPPQPPAASPTREGCPSPPGQTSKGSL) is disordered. T188 carries the phosphothreonine modification. Phosphoserine is present on S194. The LD motif 4 signature appears at 203 to 215 (SLDTMLGLLQSDL). 4 LIM zinc-binding domains span residues 226–285 (GLCG…RFSP), 286–343 (RCGF…QLFA), 344–403 (PRCQ…QRGS), and 404–461 (LCAT…KLFG). At S403 the chain carries Phosphoserine. A Phosphothreonine modification is found at T407.

This sequence belongs to the paxillin family. Homooligomer. Interacts with PPARG. Interacts with TRAF4. Interacts with CRIP2. Interacts with HSPB1. Interacts with ILK. Interacts with LIMS1 and LIMS2. Interacts with NCK2. Interacts with NUDT16L1. Interacts with PAK. Interacts with PTPN12. Interacts with TCF3. Interacts with TCF7L2. Interacts with VCL. Interacts (via LD motif 3) with GIT1. Also interacts with GIT2. Forms a complex with ARHGEF7. Interacts with AR/androgen receptor in a ligand-dependent manner. Interacts with CSK. Interacts with PTK2/FAK1 and PTK2B/PYK2. Interacts with SLC6A3. Interacts with SLC6A4. Interacts with NR3C1. Interacts with SMAD3. Interacts with MAPK15. Interacts with SRC. Interacts with LYN. Interacts with talin. Interacts (via LIM zinc-binding domain 2) with CBLC (via RING-type zinc finger); the interaction is direct and enhances CBLC E3 ubiquitin-protein ligase activity. Interacts with PARVA. Interacts with PXN. Post-translationally, phosphorylated by gonadotropin-releasing hormone-activated SRC. In terms of tissue distribution, ubiquitously expressed. Higher expression is detected in lung and spleen. Expression decreases during pregnancy in mammary glands. Expressed in all brain areas, with higher levels in cerebellum, prefrontal cortex and hypothalamus. Expressed in smooth muscle, myoepithelial cells and platelets (at protein level). Preferentially expressed in mesenchymal versus epithelial cells (at protein level).

Its subcellular location is the cell junction. The protein resides in the focal adhesion. It localises to the nucleus matrix. It is found in the cytoplasm. The protein localises to the cytoskeleton. Its function is as follows. Functions as a molecular adapter coordinating multiple protein-protein interactions at the focal adhesion complex and in the nucleus. Links various intracellular signaling modules to plasma membrane receptors and regulates the Wnt and TGFB signaling pathways. May also regulate SLC6A3 and SLC6A4 targeting to the plasma membrane hence regulating their activity. In the nucleus, functions as a nuclear receptor coactivator regulating glucocorticoid, androgen, mineralocorticoid and progesterone receptor transcriptional activity. May play a role in the processes of cell growth, proliferation, migration, differentiation and senescence. May have a zinc-dependent DNA-binding activity. The protein is Transforming growth factor beta-1-induced transcript 1 protein (Tgfb1i1) of Mus musculus (Mouse).